The primary structure comprises 88 residues: Small ribosomal subunit protein bS20 (88 aa).

Belongs to the bacterial ribosomal protein bS20 family.

Its function is as follows. Binds directly to 16S ribosomal RNA. This is Small ribosomal subunit protein bS20 from Renibacterium salmoninarum (strain ATCC 33209 / DSM 20767 / JCM 11484 / NBRC 15589 / NCIMB 2235).